The chain runs to 538 residues: Putative cysteine ligase BshC (538 aa).

Positions I248 to L268 form a coiled coil.

The protein belongs to the BshC family.

Involved in bacillithiol (BSH) biosynthesis. May catalyze the last step of the pathway, the addition of cysteine to glucosamine malate (GlcN-Mal) to generate BSH. The sequence is that of Putative cysteine ligase BshC from Bacillus cereus (strain ATCC 14579 / DSM 31 / CCUG 7414 / JCM 2152 / NBRC 15305 / NCIMB 9373 / NCTC 2599 / NRRL B-3711).